An 89-amino-acid chain; its full sequence is MARSLRKGPFVDEHLIKKVLAAQGNNDRKPIKTWSRRSVVVPEMIGLTIAVHNGRVHVPVSINENMVGHKLGEFAITRTFKGHFGDRKA.

It belongs to the universal ribosomal protein uS19 family.

In terms of biological role, protein S19 forms a complex with S13 that binds strongly to the 16S ribosomal RNA. This chain is Small ribosomal subunit protein uS19, found in Vesicomyosocius okutanii subsp. Calyptogena okutanii (strain HA).